The following is a 309-amino-acid chain: tRNA dimethylallyltransferase (309 aa).

9-16 is a binding site for ATP; the sequence is GPTAVGKT. Position 11–16 (11–16) interacts with substrate; sequence TAVGKT. The interval 34-37 is interaction with substrate tRNA; it reads DSMQ.

Belongs to the IPP transferase family. Monomer. Mg(2+) serves as cofactor.

The enzyme catalyses adenosine(37) in tRNA + dimethylallyl diphosphate = N(6)-dimethylallyladenosine(37) in tRNA + diphosphate. Its function is as follows. Catalyzes the transfer of a dimethylallyl group onto the adenine at position 37 in tRNAs that read codons beginning with uridine, leading to the formation of N6-(dimethylallyl)adenosine (i(6)A). This Enterococcus faecalis (strain ATCC 700802 / V583) protein is tRNA dimethylallyltransferase.